The sequence spans 1438 residues: DNA polymerase III PolC-type (1438 aa).

One can recognise an Exonuclease domain in the interval 422–578 (YVVFDVETTG…YDTESTAYIF (157 aa)).

It belongs to the DNA polymerase type-C family. PolC subfamily.

The protein resides in the cytoplasm. It catalyses the reaction DNA(n) + a 2'-deoxyribonucleoside 5'-triphosphate = DNA(n+1) + diphosphate. In terms of biological role, required for replicative DNA synthesis. This DNA polymerase also exhibits 3' to 5' exonuclease activity. The sequence is that of DNA polymerase III PolC-type from Staphylococcus haemolyticus (strain JCSC1435).